The chain runs to 256 residues: Pyrroloquinoline-quinone synthase (256 aa).

It belongs to the PqqC family.

It carries out the reaction 6-(2-amino-2-carboxyethyl)-7,8-dioxo-1,2,3,4,7,8-hexahydroquinoline-2,4-dicarboxylate + 3 O2 = pyrroloquinoline quinone + 2 H2O2 + 2 H2O + H(+). The protein operates within cofactor biosynthesis; pyrroloquinoline quinone biosynthesis. Its function is as follows. Ring cyclization and eight-electron oxidation of 3a-(2-amino-2-carboxyethyl)-4,5-dioxo-4,5,6,7,8,9-hexahydroquinoline-7,9-dicarboxylic-acid to PQQ. This chain is Pyrroloquinoline-quinone synthase, found in Rhizobium meliloti (strain 1021) (Ensifer meliloti).